The following is a 117-amino-acid chain: Immunoglobulin heavy variable 1-84 (117 aa).

An N-terminal signal peptide occupies residues 1–19 (MGWSWIFLFLLSGTAGVHC). A framework-1 region spans residues 20–49 (QIQLQQSGPELVKPGASVKISCKASGYTFT). An Ig-like domain is found at 31–117 (VKPGASVKIS…EDSAVYFCAR (87 aa)). Residues Cys-41 and Cys-115 are joined by a disulfide bond. The tract at residues 50–54 (DYYIN) is complementarity-determining-1. A framework-2 region spans residues 55 to 68 (WVKQRPGQGLEWIG). The complementarity-determining-2 stretch occupies residues 69–85 (WIYPGSGNTKYNEKFKG). The segment at 86–117 (KATLTVDTSSSTAYMQLSSLTSEDSAVYFCAR) is framework-3.

This Mus musculus (Mouse) protein is Immunoglobulin heavy variable 1-84.